Consider the following 792-residue polypeptide: Molybdenum cofactor sulfurase (792 aa).

Residue K246 is modified to N6-(pyridoxal phosphate)lysine. The active site involves C414. The 147-residue stretch at 646-792 (LRLLRQSSQR…LTCGDVVVVT (147 aa)) folds into the MOSC domain. Residue S748 is modified to Phosphoserine.

Belongs to the class-V pyridoxal-phosphate-dependent aminotransferase family. MOCOS subfamily. It depends on pyridoxal 5'-phosphate as a cofactor.

It carries out the reaction Mo-molybdopterin + L-cysteine + AH2 = thio-Mo-molybdopterin + L-alanine + A + H2O. It participates in cofactor biosynthesis; molybdopterin biosynthesis. Its function is as follows. Sulfurates the molybdenum cofactor. Sulfation of molybdenum is essential for xanthine dehydrogenase (XDH) and aldehyde oxidase (ADO) enzymes in which molybdenum cofactor is liganded by 1 oxygen and 1 sulfur atom in active form. In Drosophila pseudoobscura pseudoobscura (Fruit fly), this protein is Molybdenum cofactor sulfurase.